The chain runs to 253 residues: Beta-crystallin B1 (253 aa).

Residues 1 to 18 (MSQPAAKASATAAVNPGP) show a composition bias toward low complexity. A disordered region spans residues 1-53 (MSQPAAKASATAAVNPGPDGKGKAGPPPGPAPGSGPAPAPAPAPAQPAPAAKA). Ser2 is subject to N-acetylserine. Residues 2 to 59 (SQPAAKASATAAVNPGPDGKGKAGPPPGPAPGSGPAPAPAPAPAQPAPAAKAELPPGS) form an N-terminal arm region. Positions 25–47 (GPPPGPAPGSGPAPAPAPAPAQP) are enriched in pro residues. Beta/gamma crystallin 'Greek key' domains lie at 60–99 (YKLVVFEQENFQGRRVEFSGECLNLGDRGFERVRSIIVTS) and 100–144 (GPWV…RPIK). The segment at 145 to 149 (MDAQE) is connecting peptide. Beta/gamma crystallin 'Greek key' domains are found at residues 150–191 (HKLC…RVSS) and 192–234 (GTWV…RRLR). Residues 236–253 (RQWHREGCFPVLAAEPPK) form a C-terminal arm region.

The protein belongs to the beta/gamma-crystallin family. Homo/heterodimer, or complexes of higher-order. The structure of beta-crystallin oligomers seems to be stabilized through interactions between the N-terminal arms. Post-translationally, specific cleavages in the N-terminal arm occur during lens maturation and give rise to truncated forms, leading to impaired oligomerization and protein insolubilization.

In terms of biological role, crystallins are the dominant structural components of the vertebrate eye lens. This chain is Beta-crystallin B1 (CRYBB1), found in Bos taurus (Bovine).